The primary structure comprises 457 residues: tRNA modification GTPase MnmE (457 aa).

Positions 23, 86, and 125 each coordinate (6S)-5-formyl-5,6,7,8-tetrahydrofolate. Residues 221-377 (GVSVLIAGKP…LREAVFETFI (157 aa)) enclose the TrmE-type G domain. Asn-231 is a binding site for K(+). GTP is bound by residues 231-236 (NVGKSS), 250-256 (TSVPGTT), and 275-278 (DTAG). Residue Ser-235 participates in Mg(2+) binding. 3 residues coordinate K(+): Thr-250, Val-252, and Thr-255. Residue Thr-256 participates in Mg(2+) binding. Lys-457 contacts (6S)-5-formyl-5,6,7,8-tetrahydrofolate.

It belongs to the TRAFAC class TrmE-Era-EngA-EngB-Septin-like GTPase superfamily. TrmE GTPase family. As to quaternary structure, homodimer. Heterotetramer of two MnmE and two MnmG subunits. Requires K(+) as cofactor.

The protein resides in the cytoplasm. Its function is as follows. Exhibits a very high intrinsic GTPase hydrolysis rate. Involved in the addition of a carboxymethylaminomethyl (cmnm) group at the wobble position (U34) of certain tRNAs, forming tRNA-cmnm(5)s(2)U34. This chain is tRNA modification GTPase MnmE, found in Geobacter metallireducens (strain ATCC 53774 / DSM 7210 / GS-15).